The following is a 148-amino-acid chain: uncharacterized protein (148 aa).

An N-terminal signal peptide occupies residues 1 to 18 (MKIILTVLAGVGLLSAGG). A lipid anchor (N-palmitoyl cysteine) is attached at Cys-19. A lipid anchor (S-diacylglycerol cysteine) is attached at Cys-19.

The protein localises to the cell membrane. This is an uncharacterized protein from Bacillus subtilis (strain 168).